The chain runs to 477 residues: Protein DETOXIFICATION 5 (477 aa).

12 consecutive transmembrane segments (helical) span residues 38 to 58 (AAPMATVTVSQYLLPVISVMV), 72 to 92 (LATAFANVSGFGIMYGLVGAL), 113 to 133 (FSAIVSNVPIVVLISILWFYM), 146 to 166 (ISKVAGSYAVCLIPALLAQAV), 187 to 207 (AITTLLFHIPVCLILVYAFGL), 211 to 231 (GAALAIGLSYWFNVLILALYV), 263 to 283 (AAMTTIEWSLFELLILSSGLL), 292 to 312 (VLSICLTTSSLHCVIPMGIGA), 333 to 353 (AVFAGIFLWFLEATICSTLLF), 376 to 396 (LSSLLCLSFMVDGFSSVLDGV), 411 to 431 (VVAYYLLGAPVGFFLGFWGHM), and 436 to 456 (LWIGVIVGSTAQGIILAIVTA).

It belongs to the multi antimicrobial extrusion (MATE) (TC 2.A.66.1) family.

It localises to the membrane. The protein is Protein DETOXIFICATION 5 of Arabidopsis thaliana (Mouse-ear cress).